The chain runs to 1170 residues: Glucose transport transcription regulator RGT1 (1170 aa).

A compositionally biased stretch (polar residues) spans 1 to 22 (MNELNTVSTNSSDSTKNGGTSN). Positions 1 to 46 (MNELNTVSTNSSDSTKNGGTSNSPDDMDSAAAASHAIKKRTKASRA) are disordered. The segment at residues 47–76 (CDQCRKKKIKCDYKDEKGVCSNCQRNGDRC) is a DNA-binding region (zn(2)-C6 fungal-type). Residues 77–149 (SFDRVPLKRG…PSTPSRSNSV (73 aa)) are disordered. The span at 99–108 (RTNEIQDHNN) shows a compositional bias: basic and acidic residues. Positions 113-138 (NTFDNSNNTLNNNTGNSGDNGINSNT) are enriched in low complexity. Residues 139–149 (VPSTPSRSNSV) show a composition bias toward polar residues. Residues Ser-202, Ser-205, Ser-208, and Ser-229 each carry the phosphoserine modification. 5 disordered regions span residues 226–254 (VQQSPITNKHTNDSGNANGSVTGSGSASG), 269–288 (APTDDHNGEQTRRSSSIPSL), 293–323 (SNSLLLGGQPQLPPPQQQSQPQAHQQKLQQG), 384–506 (AQQT…HPMT), and 944–977 (NYRPPNPPANNPTVQEGPSAMGSSPVAGNLSAAP). Over residues 239 to 250 (SGNANGSVTGSG) the composition is skewed to low complexity. The segment covering 271–280 (TDDHNGEQTR) has biased composition (basic and acidic residues). 2 positions are modified to phosphoserine: Ser-283 and Ser-284. 3 stretches are compositionally biased toward low complexity: residues 293 to 302 (SNSLLLGGQP), 309 to 323 (QQSQPQAHQQKLQQG), and 385 to 397 (QQTQRPQGQQVPQ). 2 positions are modified to phosphoserine: Ser-410 and Ser-414. The span at 411–422 (APVSVTLSTDRL) shows a compositional bias: polar residues. The span at 424–444 (GNENNNGEINNNNGSNNSGSS) shows a compositional bias: low complexity. The segment covering 445 to 457 (KDTSQHSQESVTT) has biased composition (polar residues). Residues 473-488 (STKKRRKSYVSKKTKP) are compositionally biased toward basic residues. Over residues 493–506 (SISITSKDSAHPMT) the composition is skewed to polar residues. Position 1130 is a phosphoserine (Ser-1130).

Belongs to the EDS1/RGT1 family. In terms of processing, glucose-induced phosphorylation regulates the DNA-binding activity. Hyperphosphorylation in cells growing on high levels of glucose does prevents DNA-binding and dephosphorylation restores DNA-binding ability.

Its subcellular location is the nucleus. The protein localises to the cytoplasm. Glucose-responsive transcription factor that regulates expression of several glucose transporter (HXT) genes in response to glucose. In the absence of glucose, it functions as a transcriptional repressor, whereas high concentrations of glucose cause it to function as a transcriptional activator. In cells growing on low levels of glucose, has a neutral role, neither repressing nor activating transcription. Binds the consensus binding site sequence 5'-CGGANNA-3', of which multiple copies are present in all HXT promoters regulated by RGT1. This chain is Glucose transport transcription regulator RGT1 (RGT1), found in Saccharomyces cerevisiae (strain RM11-1a) (Baker's yeast).